We begin with the raw amino-acid sequence, 474 residues long: MTNSPAPTTSGVVTRFAPSPTGFLHIGGARTALFNWLYARHTGGKFLVRVEDTDRERSTQAAVAAIFEGLDWLGMKSDEEVVFQHKKADRHREAVQQLLDTGRAYRCWMSVEDLALAREAARAGGPALRSPWRDAPPPNDPTAPHVIRFKGPLDGTTLVDDLVKGPVTFDNAELDDLVLLRADGAPTYNLAVVVDDHDMGVTHVIRGDDHLNNAARQTLIYQAMGWTLPAFGHIPLIHGPDGAKLSKRHGAQAVGEFQDMGYLPEGLRNYLARLGWGHGDDEVFSDAQAIEWFDVKDVVKAPARLDWAKLNFINSQHLHVAEDGRLADLTLKALQAQGAPLPDDAPARLLATVPQVKVGAKTILELAEHCAFALKVRPLALEEKTRNQLTDETVDRLKRLRAQLGAVPVWGLSELEVLLKSFAESEGVGFGKFGPSLRGILTGGSQAPDLNKIMTALGREESLGRLDDALASRA.

A 'HIGH' region motif is present at residues 18–28 (PSPTGFLHIGG). The 'KMSKS' region motif lies at 244–248 (KLSKR). K247 provides a ligand contact to ATP.

The protein belongs to the class-I aminoacyl-tRNA synthetase family. Glutamate--tRNA ligase type 1 subfamily. Monomer.

It is found in the cytoplasm. The enzyme catalyses tRNA(Glu) + L-glutamate + ATP = L-glutamyl-tRNA(Glu) + AMP + diphosphate. In terms of biological role, catalyzes the attachment of glutamate to tRNA(Glu) in a two-step reaction: glutamate is first activated by ATP to form Glu-AMP and then transferred to the acceptor end of tRNA(Glu). The chain is Glutamate--tRNA ligase from Caulobacter sp. (strain K31).